Reading from the N-terminus, the 711-residue chain is MTRTLLSWPGGRRLKWLVLAAWIGLLIVLQPLAGKLGDVESNDAAAWLPGNAESTEVLELSEKFQPADTSPTVIVYDRPSGITAADEAKARADATHFADGTGVVGEPYGPVRSDDGKALRTVVNVHLGKDGWEGLNAAAKDMRAIARPSAPDGLGVHVTGPTGYAADSAESFSSADFKLTLVTLLIVVTILVVTYRSPLLWLLPMISAGMSLVISQAIVYLLAKNAGLTVNAQTAMILTVLVLGAATDYALLLVARYREELRRHEDRHEAMAVALRRAGPAIVASAATVAVSMLVLLLAALNSTKGLGPVCAVGVLVGLLSMMTLLPALLVIFGRWVFWPARPKHGTEPDVTRGLWSRIARLVSGRPRAVWVTTSLLLGAVATLAVTLNADGLQQKDGFKTKPESVVGEEILTRHFPAGSGEPMVVIAKGASADQVHAALETVPGVIEVAPPQVKDGLAYVEATLGAGADSPAAMRSVTAARETLARLDGAQARVGGSSAVVHDMREASSRDRGLIIPVILAVVFCILALLLRALVAPLLLIASVVLSFFTALGLAALFFNHVFDFAGADSAFPLWVFVFLVALGVDYNIFLVTRIKEESDRLGTRQGALKGLTSTGGVITAAGLVLAGTFAALATLPLVFIAELGFTVAVGVLLDTMIVRSVLVTALTLDVGRWMWWPHPLARREDPSEDPAVSGMPDSIDSEASTTASR.

A run of 12 helical transmembrane segments spans residues 14-34 (LKWL…PLAG), 175-195 (ADFK…VVTY), 199-219 (LLWL…QAIV), 235-255 (AMIL…LLVA), 281-301 (AIVA…LAAL), 313-333 (VGVL…LVIF), 369-389 (AVWV…VTLN), 516-536 (IIPV…RALV), 540-560 (LLIA…ALFF), 573-593 (FPLW…IFLV), 623-643 (AGLV…VFIA), and 645-665 (LGFT…SVLV). The disordered stretch occupies residues 685–711 (REDPSEDPAVSGMPDSIDSEASTTASR).

It belongs to the resistance-nodulation-cell division (RND) (TC 2.A.6) family. MmpL subfamily.

The protein resides in the cell membrane. The protein is Putative membrane protein ActII-3 (actII-3) of Streptomyces coelicolor (strain ATCC BAA-471 / A3(2) / M145).